A 176-amino-acid chain; its full sequence is Large ribosomal subunit protein uL6 (176 aa).

Belongs to the universal ribosomal protein uL6 family. As to quaternary structure, part of the 50S ribosomal subunit.

Its function is as follows. This protein binds to the 23S rRNA, and is important in its secondary structure. It is located near the subunit interface in the base of the L7/L12 stalk, and near the tRNA binding site of the peptidyltransferase center. This is Large ribosomal subunit protein uL6 from Paraburkholderia phytofirmans (strain DSM 17436 / LMG 22146 / PsJN) (Burkholderia phytofirmans).